Reading from the N-terminus, the 1041-residue chain is Leucine-rich repeat receptor-like protein kinase TDR (1041 aa).

The signal sequence occupies residues 1-29 (MKKKNISPSLVLHPLLLLLLPFFAFNSLA). Topologically, residues 30-652 (LKFSPQLLSL…HHKEERPKKT (623 aa)) are extracellular. Residues C69 and C76 are joined by a disulfide bond. N-linked (GlcNAc...) asparagine glycosylation is found at N78, N92, and N111. 21 LRR repeats span residues 80–104 (TAQV…IRYL), 105–128 (SSLL…IFDL), 130–152 (KLTT…ISKL), 154–176 (FLKV…VSRL), 177–199 (RFLE…AYGG), 200–224 (LQRL…LGLL), 225–248 (TELQ…FALL), 250–272 (NLKY…LGNL), 273–296 (SNLE…YSNL), 297–319 (KSLK…GFST), 321–344 (KNLT…IGEL), 345–368 (PELT…LGSN), 369–392 (GKLE…LCHG), 394–416 (KLYK…LTRC), 418–439 (SLWR…GFGS), 440–464 (LRNL…FATA), 466–488 (VLQY…IWKA), 511–535 (CKSF…IGHC), 536–558 (EKLL…EIST), 559–583 (LPSI…FGSS), and 585–607 (TITT…SFAH). The tract at residues 186–188 (GSY) is CLE peptide binding. The CLE peptide binding stretch occupies residues 233 to 235 (GYN). N-linked (GlcNAc...) asparagine glycosylation is found at N258 and N271. Residues 303–307 (DFSSN) are CLE peptide binding. Residues N322, N332, and N356 are each glycosylated (N-linked (GlcNAc...) asparagine). Residues 375 to 377 (DVS) are CLE peptide binding. Residue N378 is glycosylated (N-linked (GlcNAc...) asparagine). C390 and C416 are oxidised to a cystine. Positions 421–423 (RFR) are CLE peptide binding. 5 N-linked (GlcNAc...) asparagine glycosylation sites follow: N430, N442, N471, N525, and N542. Cysteines 511 and 535 form a disulfide. Residue N590 is glycosylated (N-linked (GlcNAc...) asparagine). The cysteines at positions 620 and 628 are disulfide-linked. A helical membrane pass occupies residues 653 to 673 (AGAIVWILAAAIGVGFFVLVA). Topologically, residues 674-1041 (ATRCFQKSYG…HDVKCQRIGV (368 aa)) are cytoplasmic. T710 carries the post-translational modification Phosphothreonine. Positions 719–1001 (SKTDNILGMG…DVLLILQEAK (283 aa)) constitute a Protein kinase domain. Residues 725–733 (LGMGSTGTV) and K747 contribute to the ATP site. Phosphotyrosine is present on residues Y798 and Y839. D852 serves as the catalytic Proton acceptor. S884 is modified (phosphoserine). Phosphotyrosine occurs at positions 892 and 899. The residue at position 900 (T900) is a Phosphothreonine.

Belongs to the protein kinase superfamily. Ser/Thr protein kinase family. As to quaternary structure, interacts specifically with the mature peptides CLE41p and CLE44p, especially in the presence of SERK2. Interacts with LURE1.2. In terms of tissue distribution, widely expressed along the vascular strands. In roots and hypocotyls, confined to procambial cells.

The protein localises to the cell membrane. The enzyme catalyses L-seryl-[protein] + ATP = O-phospho-L-seryl-[protein] + ADP + H(+). The catalysed reaction is L-threonyl-[protein] + ATP = O-phospho-L-threonyl-[protein] + ADP + H(+). Acts with CLE41p and CLE44p peptides as a ligand-receptor pair in a signal transduction pathway involved in the regulation of procambium maintenance and polarity during vascular-tissue development. Mediates repression of tracheary element differentiation and the promotion of procambial cells formation and polar division adjacent to phloem cells in the veins. In Arabidopsis thaliana (Mouse-ear cress), this protein is Leucine-rich repeat receptor-like protein kinase TDR.